The primary structure comprises 285 residues: Bifunctional protein FolD (285 aa).

NADP(+) contacts are provided by residues 166 to 168 (GAS) and Ile-232.

The protein belongs to the tetrahydrofolate dehydrogenase/cyclohydrolase family. As to quaternary structure, homodimer.

The enzyme catalyses (6R)-5,10-methylene-5,6,7,8-tetrahydrofolate + NADP(+) = (6R)-5,10-methenyltetrahydrofolate + NADPH. It carries out the reaction (6R)-5,10-methenyltetrahydrofolate + H2O = (6R)-10-formyltetrahydrofolate + H(+). The protein operates within one-carbon metabolism; tetrahydrofolate interconversion. In terms of biological role, catalyzes the oxidation of 5,10-methylenetetrahydrofolate to 5,10-methenyltetrahydrofolate and then the hydrolysis of 5,10-methenyltetrahydrofolate to 10-formyltetrahydrofolate. This is Bifunctional protein FolD from Vibrio atlanticus (strain LGP32) (Vibrio splendidus (strain Mel32)).